The primary structure comprises 745 residues: Cytoskeleton-associated protein 2-like (745 aa).

Disordered regions lie at residues 26-305 (KGKL…VNRV), 319-362 (PATE…LGPQ), 422-483 (FPPQ…TYKR), and 608-638 (EAVTSDTSAAGTNTTSAEELAKEESEQPCPS). Polar residues-rich tracts occupy residues 67–89 (SKTTRPINIKFQTKPASITASQK) and 101–136 (GLTSRCFSSNTDCKQSSKPQQQPRAVSFTAGLSRNP). The KEN box motif lies at 183-185 (KEN). The span at 192 to 202 (KPEKPDPELHS) shows a compositional bias: basic and acidic residues. A Glycyl lysine isopeptide (Lys-Gly) (interchain with G-Cter in SUMO1); alternate cross-link involves residue K195. K195 participates in a covalent cross-link: Glycyl lysine isopeptide (Lys-Gly) (interchain with G-Cter in SUMO2); alternate. Composition is skewed to polar residues over residues 205–216 (KPNTGSSNQTQK), 224–233 (LSKSSVTQTA), 242–253 (FIRNTQIRTQAV), and 284–301 (NKTQTSKKPMTKNTQDIT). Polar residues predominate over residues 427-442 (HFLNKTAPRTQASTAA). Basic and acidic residues predominate over residues 459–475 (KKPEGEDRRKQLEEWQK). Residues 608 to 624 (EAVTSDTSAAGTNTTSA) show a composition bias toward polar residues. The residue at position 745 (S745) is a Phosphoserine.

Belongs to the CKAP2 family. Ubiquitinated by the anaphase promoting complex/cyclosome (APC/C). As to expression, highly expressed in regions of active neurogenesis and neural stem/progenitor cells (NSPCs), both embryonic and adult, not detected in lung, liver, kidney, heart, and skeletal muscle.

The protein resides in the cytoplasm. The protein localises to the cytoskeleton. Its subcellular location is the spindle pole. Microtubule-associated protein required for mitotic spindle formation and cell-cycle progression in neural progenitor cells. The chain is Cytoskeleton-associated protein 2-like (Ckap2l) from Mus musculus (Mouse).